The following is a 139-amino-acid chain: Trafficking protein particle complex subunit 2-like protein (139 aa).

This sequence belongs to the TRAPP small subunits family. Sedlin subfamily. As to quaternary structure, component of the multisubunit TRAPP (transport protein particle) complex, which includes at least TRAPPC2, TRAPPC2L, TRAPPC3, TRAPPC3L, TRAPPC4, TRAPPC5, TRAPPC8, TRAPPC9, TRAPPC10, TRAPPC11 and TRAPPC12. Interacts with the heterodimer TRAPPC3-TRAPPC6A.

It localises to the cytoplasm. The protein resides in the perinuclear region. Its subcellular location is the endoplasmic reticulum. It is found in the golgi apparatus. May play a role in vesicular transport from endoplasmic reticulum to Golgi. In Bos taurus (Bovine), this protein is Trafficking protein particle complex subunit 2-like protein (TRAPPC2L).